A 152-amino-acid chain; its full sequence is Catabolic 3-dehydroquinase (152 aa).

Tyr24 (proton acceptor) is an active-site residue. Positions 75, 81, and 88 each coordinate substrate. The active-site Proton donor is His101. Residues 102–103 (IS) and Arg112 each bind substrate.

The protein belongs to the type-II 3-dehydroquinase family. As to quaternary structure, homododecamer. Adopts a ring-like structure, composed of an arrangement of two hexameric rings stacked on top of one another.

The catalysed reaction is 3-dehydroquinate = 3-dehydroshikimate + H2O. Its pathway is aromatic compound metabolism; 3,4-dihydroxybenzoate biosynthesis; 3,4-dihydroxybenzoate from 3-dehydroquinate: step 1/2. In terms of biological role, is involved in the catabolism of quinate. Allows the utilization of quinate as carbon source via the beta-ketoadipate pathway. This Phaeosphaeria nodorum (strain SN15 / ATCC MYA-4574 / FGSC 10173) (Glume blotch fungus) protein is Catabolic 3-dehydroquinase.